The sequence spans 247 residues: Small ribosomal subunit protein eS6 (247 aa).

Residues 194–247 (ALKKKRVTKKREDHAEYTKLLAQRMKEAKERKMERKRSNSRSKGDSIRESTSKK) are disordered. A compositionally biased stretch (basic and acidic residues) spans 217-247 (RMKEAKERKMERKRSNSRSKGDSIRESTSKK).

Belongs to the eukaryotic ribosomal protein eS6 family. In terms of processing, ribosomal protein S6 is the major substrate of protein kinases in eukaryote ribosomes.

Its function is as follows. Component of the 40S small ribosomal subunit. Plays an important role in controlling cell growth and proliferation through the selective translation of particular classes of mRNA. This chain is Small ribosomal subunit protein eS6 (RPS6), found in Aplysia californica (California sea hare).